The following is a 56-amino-acid chain: Conotoxin Cal6.41b (56 aa).

An N-terminal signal peptide occupies residues 1–23 (MSGSGAMLLGLLILVAMATSLDT). 3 disulfide bridges follow: C27-C41, C33-C50, and C40-C54.

As to expression, expressed by the venom duct.

It localises to the secreted. Its function is as follows. Probable neurotoxin. This chain is Conotoxin Cal6.41b, found in Californiconus californicus (California cone).